Here is a 734-residue protein sequence, read N- to C-terminus: Photosystem I P700 chlorophyll a apoprotein A2 (734 aa).

8 helical membrane-spanning segments follow: residues 46 to 69 (IFAS…FHVA), 135 to 158 (LYTG…LHLQ), 175 to 199 (LNHH…HVAI), 273 to 291 (MAHH…GHMY), 330 to 353 (LHFQ…QHMY), 369 to 395 (AALY…IFFI), 417 to 439 (AIIS…LYVH), and 517 to 535 (FLVH…LILV). Residues Cys-559 and Cys-568 each contribute to the [4Fe-4S] cluster site. The next 2 helical transmembrane spans lie at 575–596 (AFYL…YWHW) and 643–665 (LSVW…MFLI). The chlorophyll a site is built by His-654, Met-662, and Tyr-670. Trp-671 is a phylloquinone binding site. The helical transmembrane segment at 707-727 (LVGLAHFSVGYIFTYAAFLIA) threads the bilayer.

It belongs to the PsaA/PsaB family. As to quaternary structure, the PsaA/B heterodimer binds the P700 chlorophyll special pair and subsequent electron acceptors. PSI consists of a core antenna complex that captures photons, and an electron transfer chain that converts photonic excitation into a charge separation. The eukaryotic PSI reaction center is composed of at least 11 subunits. P700 is a chlorophyll a/chlorophyll a' dimer, A0 is one or more chlorophyll a, A1 is one or both phylloquinones and FX is a shared 4Fe-4S iron-sulfur center. is required as a cofactor.

It localises to the plastid. The protein resides in the chloroplast thylakoid membrane. It catalyses the reaction reduced [plastocyanin] + hnu + oxidized [2Fe-2S]-[ferredoxin] = oxidized [plastocyanin] + reduced [2Fe-2S]-[ferredoxin]. Functionally, psaA and PsaB bind P700, the primary electron donor of photosystem I (PSI), as well as the electron acceptors A0, A1 and FX. PSI is a plastocyanin-ferredoxin oxidoreductase, converting photonic excitation into a charge separation, which transfers an electron from the donor P700 chlorophyll pair to the spectroscopically characterized acceptors A0, A1, FX, FA and FB in turn. Oxidized P700 is reduced on the lumenal side of the thylakoid membrane by plastocyanin. The chain is Photosystem I P700 chlorophyll a apoprotein A2 from Solanum tuberosum (Potato).